We begin with the raw amino-acid sequence, 307 residues long: Aspartate carbamoyltransferase catalytic subunit (307 aa).

Residues arginine 55 and threonine 56 each coordinate carbamoyl phosphate. Lysine 85 provides a ligand contact to L-aspartate. The carbamoyl phosphate site is built by arginine 106, histidine 135, and glutamine 138. L-aspartate-binding residues include arginine 168 and arginine 230. 2 residues coordinate carbamoyl phosphate: leucine 268 and proline 269.

The protein belongs to the aspartate/ornithine carbamoyltransferase superfamily. ATCase family. Heterododecamer (2C3:3R2) of six catalytic PyrB chains organized as two trimers (C3), and six regulatory PyrI chains organized as three dimers (R2).

The enzyme catalyses carbamoyl phosphate + L-aspartate = N-carbamoyl-L-aspartate + phosphate + H(+). The protein operates within pyrimidine metabolism; UMP biosynthesis via de novo pathway; (S)-dihydroorotate from bicarbonate: step 2/3. Catalyzes the condensation of carbamoyl phosphate and aspartate to form carbamoyl aspartate and inorganic phosphate, the committed step in the de novo pyrimidine nucleotide biosynthesis pathway. This is Aspartate carbamoyltransferase catalytic subunit from Photorhabdus laumondii subsp. laumondii (strain DSM 15139 / CIP 105565 / TT01) (Photorhabdus luminescens subsp. laumondii).